The sequence spans 319 residues: Methionyl-tRNA formyltransferase (319 aa).

Residue 116–119 (SLLP) participates in (6S)-5,6,7,8-tetrahydrofolate binding.

Belongs to the Fmt family.

It catalyses the reaction L-methionyl-tRNA(fMet) + (6R)-10-formyltetrahydrofolate = N-formyl-L-methionyl-tRNA(fMet) + (6S)-5,6,7,8-tetrahydrofolate + H(+). In terms of biological role, attaches a formyl group to the free amino group of methionyl-tRNA(fMet). The formyl group appears to play a dual role in the initiator identity of N-formylmethionyl-tRNA by promoting its recognition by IF2 and preventing the misappropriation of this tRNA by the elongation apparatus. The chain is Methionyl-tRNA formyltransferase from Treponema pallidum (strain Nichols).